A 302-amino-acid polypeptide reads, in one-letter code: Sulfate adenylyltransferase subunit 2 (302 aa).

It belongs to the PAPS reductase family. CysD subfamily. Heterodimer composed of CysD, the smaller subunit, and CysN.

It carries out the reaction sulfate + ATP + H(+) = adenosine 5'-phosphosulfate + diphosphate. The protein operates within sulfur metabolism; hydrogen sulfide biosynthesis; sulfite from sulfate: step 1/3. Its function is as follows. With CysN forms the ATP sulfurylase (ATPS) that catalyzes the adenylation of sulfate producing adenosine 5'-phosphosulfate (APS) and diphosphate, the first enzymatic step in sulfur assimilation pathway. APS synthesis involves the formation of a high-energy phosphoric-sulfuric acid anhydride bond driven by GTP hydrolysis by CysN coupled to ATP hydrolysis by CysD. The protein is Sulfate adenylyltransferase subunit 2 of Escherichia coli O157:H7 (strain EC4115 / EHEC).